The sequence spans 476 residues: Serine/threonine-protein kinase PknF (476 aa).

Residues 12-279 (FTIVRQLGSG…FARALGHRLG (268 aa)) form the Protein kinase domain. Residues 18-26 (LGSGGMGEV) and lysine 41 contribute to the ATP site. Aspartate 137 acts as the Proton acceptor in catalysis. The helical transmembrane segment at 306-326 (TAVIVPAVLAMLLVMAVAVAV) threads the bilayer. A disordered region spans residues 332 to 376 (ADDERAAQPARTRTTTSAGTTTSVAPASTTRPAPTTPTTTGAADT). A compositionally biased stretch (low complexity) spans 338–376 (AQPARTRTTTSAGTTTSVAPASTTRPAPTTPTTTGAADT).

The protein belongs to the protein kinase superfamily. Ser/Thr protein kinase family. In terms of processing, autophosphorylated. Dephosphorylated by PstP.

The protein resides in the cell membrane. It catalyses the reaction L-seryl-[protein] + ATP = O-phospho-L-seryl-[protein] + ADP + H(+). The enzyme catalyses L-threonyl-[protein] + ATP = O-phospho-L-threonyl-[protein] + ADP + H(+). Its function is as follows. A serine/threonine-protein kinase, acts on HupB in vitro. This chain is Serine/threonine-protein kinase PknF, found in Mycobacterium tuberculosis (strain ATCC 25177 / H37Ra).